Consider the following 330-residue polypeptide: tRNA-modifying protein YgfZ (330 aa).

W28 and W190 together coordinate folate.

Belongs to the tRNA-modifying YgfZ family.

Its subcellular location is the cytoplasm. Folate-binding protein involved in regulating the level of ATP-DnaA and in the modification of some tRNAs. It is probably a key factor in regulatory networks that act via tRNA modification, such as initiation of chromosomal replication. This is tRNA-modifying protein YgfZ from Yersinia pestis bv. Antiqua (strain Antiqua).